Reading from the N-terminus, the 1004-residue chain is MPSKFSCRKLRETGQRFESFLAERGLDLETDRERLRTIYNHDFKPSYGTPAPGFSSMLYGMKIANLAFVTKTRVRFFKLDRWADVQLPEKRRIKPGSNISKQHRSLLARIFHDRAEYLHGKHGVDVEVQGPHEARDGQLLIHLDLNRKEVLTLRLRNGGSKPVTLTHLFPLCWTPQFVFYHGEQDLPCPLGPGESYELHIYCKTSIVGYFPATVLWELLGPGESGAEGAETFYIARFLAAVAHSPLAAQLKPTTPFKRPPRLTRNSVLTNRIEEGERPDRAKGYELELSLALGTYYPPILLRQLLPTLLQGPSIFTAPKEVAEIKAQLETTLKSRNYEVKLRLLLHLEELQMEHDIRHYDLDSVPMTWDPVDQNPRLLTLEVPGVAESRPSVLRGDHLFALLSSETQQDDPVTYKGFVHKVELDRVKLSFSTSLLSRFVDGLTFKVNFTFNRQPLRVQHRALELTGRWVLWPMLFPVASRGVSLLPSDVKFKLYDRSLESNPEQLQAMKHIVRGTTRPAPYIIFGPPGTGKTVTLVEAIKQVVKHLPKAHILACAPSNSGADLLCQRLRVHLPSSIYRLLAPSRDIRMVPEDIKTCCNWDAKKGEYVYPAKKHLQQYRVLITTLITASRLVSAQFPIDHFTHIFIDEAGHCMEPESLVAIAGLMDVKETGNPGGQLVLAGDPRQLGPVLRSPLALKHGLGYSLLERLLAYNSLYKKGPNGYDPQFITKLLRNYRSHPTILDIPNQLYYDGELQACADVVDRERFCRWEGLPQQGFPIIFHGVMGKDEREGNSPSFFNPEEAATVTSYLKQLLAPSSKKGKARLSPRNVGVISPYRKQVEKIRYCITKLDRELRGLDDIKDLKVGSVEEFQGQERSVILISTVRSSQSFVQLDLDFNLGFLKNPKRFNVAVTRAKALLIVVGNPLLLGHDPDWKTFLEFCKENGGYTGCPFPAKLDLQQGQDLLQGLSKLSPSTSGPRRHQNLPQEREGEGGLPLQVEPEWRNEL.

Lys-148 carries the post-translational modification N6-acetyllysine. Thr-254 bears the Phosphothreonine mark. Ser-433 is modified (phosphoserine). Position 525–532 (525–532 (GPPGTGKT)) interacts with ATP. A DEAG box motif is present at residues 646–649 (DEAG). Residues 922-966 (NPLLLGHDPDWKTFLEFCKENGGYTGCPFPAKLDLQQGQDLLQGL) form an interaction with AGO2 and APOBEC3G region. A disordered region spans residues 966–1004 (LSKLSPSTSGPRRHQNLPQEREGEGGLPLQVEPEWRNEL). Ser-970 bears the Phosphoserine mark.

Belongs to the DNA2/NAM7 helicase family. SDE3 subfamily. Interacts with DICER1, AGO2, TARBP2, EIF6 and RPL7A (60S ribosome subunit); they form a large RNA-induced silencing complex (RISC). Interacts with APOBEC3G in an RNA-dependent manner. Interacts with TRIM71 (via NHL repeats) in an RNA-dependent manner. Interacts with both protein products of LIRE1, ORF1p and ORF2p. Interacts with TUT4 and, to a lesser extent, TUT7; the interactions are RNA-dependent. Interacts with AGO2, TNRC6B and UPF1; the interactions are direct and RNA-dependent. Interacts with FMR1; this interaction is direct, occurs in an RNA-dependent manner on polysomes and induces association of MOV10 with RNAs. Interacts with SHFL; the interaction increases in presence of RNA. Interacts with DHX34; the interaction is RNA-independent. Interacts with RBM46. Post-translationally, ubiquitinated by the DCX(DCAF12) complex that specifically recognizes the glutamate-leucine (Glu-Leu) degron at the C-terminus, leading to its degradation.

The protein resides in the cytoplasm. The protein localises to the P-body. It localises to the nucleus. Its subcellular location is the cytoplasmic ribonucleoprotein granule. It is found in the stress granule. The enzyme catalyses ATP + H2O = ADP + phosphate + H(+). 5' to 3' RNA helicase that is involved in a number of cellular roles ranging from mRNA metabolism and translation, modulation of viral infectivity, inhibition of retrotransposition, or regulation of synaptic transmission. Plays an important role in innate antiviral immunity by promoting type I interferon production. Mechanistically, specifically uses IKKepsilon/IKBKE as the mediator kinase for IRF3 activation. Contributes to UPF1 mRNA target degradation by translocation along 3' UTRs. Required for microRNA (miRNA)-mediated gene silencing by the RNA-induced silencing complex (RISC). Required for both miRNA-mediated translational repression and miRNA-mediated cleavage of complementary mRNAs by RISC. In cooperation with FMR1, regulates miRNA-mediated translational repression by AGO2. Restricts retrotransposition of long interspersed element-1 (LINE-1) in cooperation with TUT4 and TUT7 counteracting the RNA chaperonne activity of L1RE1. Facilitates LINE-1 uridylation by TUT4 and TUT7. Required for embryonic viability and for normal central nervous system development and function. Plays two critical roles in early brain development: suppresses retroelements in the nucleus by directly inhibiting cDNA synthesis, while regulates cytoskeletal mRNAs to influence neurite outgrowth in the cytosol. May function as a messenger ribonucleoprotein (mRNP) clearance factor. In Mus musculus (Mouse), this protein is Putative helicase MOV-10 (Mov10).